A 620-amino-acid chain; its full sequence is Chaperone protein HscA homolog (620 aa).

Belongs to the heat shock protein 70 family.

Its function is as follows. Chaperone involved in the maturation of iron-sulfur cluster-containing proteins. Has a low intrinsic ATPase activity which is markedly stimulated by HscB. The sequence is that of Chaperone protein HscA homolog from Acinetobacter baumannii (strain SDF).